Reading from the N-terminus, the 66-residue chain is MAAHNLCFNSAFVCNVHHQKTQHFPCNAVSKTTSTHAVTFHRRSANYRPPLWDHQYLLSLENIYMW.

Residues 1-25 (MAAHNLCFNSAFVCNVHHQKTQHFP) constitute a chloroplast transit peptide.

This sequence belongs to the terpene synthase family. Tpsb subfamily. As to expression, expressed exclusively in flowers.

It localises to the plastid. The protein resides in the chloroplast. The protein is Putative inactive (E)-beta-ocimene synthase, chloroplastic (TPS02) of Arabidopsis thaliana (Mouse-ear cress).